We begin with the raw amino-acid sequence, 880 residues long: uncharacterized protein (880 aa).

Disordered stretches follow at residues 101 to 149 (KPIP…LRSE), 191 to 224 (PETSTPLISQSSQTSTITPSSSSTSTSTSSISTH), 240 to 273 (TTTTTTSSSSSSPPSSSIAGITNPTSRSSSPILK), 294 to 350 (NSNS…STTS), 425 to 446 (QPDSKDDESSVKSPPLPVESQP), 470 to 508 (STSTSPSSTTTTTSTTTSIIAEEPSSPILPTASPSSSSS), 536 to 561 (MESSTTTTLLSENNGGGGGSSCNDNS), 580 to 613 (APQSDSMIEQPEDDPFFDFEDLSDDDDSNDNDDE), 682 to 713 (NTNTNTNTNTNTNTNTNTNTNTNTNTNANINN), and 844 to 880 (NSSGSGNNSNDNSGSSSPSSSKTNTLNQQSICIKSEI). Residues 113 to 147 (ISIKEKEKEKEKEKEKEKEKEKEKEKEMKSTINLR) are a coiled coil. Basic and acidic residues predominate over residues 115–149 (IKEKEKEKEKEKEKEKEKEKEKEKEMKSTINLRSE). Composition is skewed to low complexity over residues 193–223 (TSTPLISQSSQTSTITPSSSSTSTSTSSIST) and 240–256 (TTTTTTSSSSSSPPSSS). Over residues 257-271 (IAGITNPTSRSSSPI) the composition is skewed to polar residues. A compositionally biased stretch (low complexity) spans 294 to 332 (NSNSSSGGGNNNNKSISTPSSPIISRPITNKINNNNNNN). The span at 333–342 (QPQLHYNQPQ) shows a compositional bias: polar residues. Low complexity predominate over residues 536 to 548 (MESSTTTTLLSEN). Residues 589 to 613 (QPEDDPFFDFEDLSDDDDSNDNDDE) show a composition bias toward acidic residues. Over residues 844-864 (NSSGSGNNSNDNSGSSSPSSS) the composition is skewed to low complexity. A compositionally biased stretch (polar residues) spans 865 to 880 (KTNTLNQQSICIKSEI).

This is an uncharacterized protein from Dictyostelium discoideum (Social amoeba).